Here is a 432-residue protein sequence, read N- to C-terminus: Transcriptional adapter 3 (432 aa).

K21 is covalently cross-linked (Glycyl lysine isopeptide (Lys-Gly) (interchain with G-Cter in SUMO2)). Residues 40–69 are a coiled coil; it reads IEELDTLQLELETLLSSASRRLRVLEAETQ. A disordered region spans residues 87–127; that stretch reads GRDHELGAPPKHGKPKKQKLEGKAGHGPGPGPGRPKSKNLQ. K129 is covalently cross-linked (Glycyl lysine isopeptide (Lys-Gly) (interchain with G-Cter in SUMO2)). Basic and acidic residues-rich tracts occupy residues 211–223 and 232–251; these read DGAR…DKKK and LDTK…HEQP. Disordered regions lie at residues 211 to 257 and 271 to 319; these read DGAR…GCPF and ENII…SRIK. Phosphoserine is present on residues S280 and S298. Residues 295-305 are compositionally biased toward polar residues; sequence ASTSPRNQNKP. Residues 367 to 407 adopt a coiled-coil conformation; it reads LLRLAKEEVSRQELRQRVRMADNEVMDAFRKIMAARQKKRT. K418 carries the N6-acetyllysine modification.

This sequence belongs to the NGG1 family. In terms of assembly, the PCAF complex is composed of a number of TBP-associated factors (TAFS), such as TAF5, TAF5L, TAF6, TAF6L, TAF9, TAF10 and TAF12, PCAF, and also PCAF-associated factors (PAFs), such as TADA2L/ADA2, TADA3L/ADA3 and SPT3. Interacts directly with TADA2L and PCAF and also with the high-risk HPV oncoprotein E6. Component of the STAGA transcription coactivator-HAT complex, at least composed of SUPT3H, GCN5L2, TAF5L, TAF6L, SUPT7L, TADA3L, TAD1L, TAF10, TAF12, TRRAP and TAF9. Component of the TFTC-HAT complex. Component of the ADA2A-containing complex (ATAC), composed of KAT14, KAT2A, TADA2L, TADA3L, ZZ3, MBIP, WDR5, YEATS2, CCDC101 and DR1.

It is found in the nucleus. Its function is as follows. Functions as a component of the PCAF complex. The PCAF complex is capable of efficiently acetylating histones in a nucleosomal context. The PCAF complex could be considered as the human version of the yeast SAGA complex. Also known as a coactivator for p53/TP53-dependent transcriptional activation. Component of the ATAC complex, a complex with histone acetyltransferase activity on histones H3 and H4. This Pongo abelii (Sumatran orangutan) protein is Transcriptional adapter 3 (TADA3).